The following is a 310-amino-acid chain: Beta-ketoacyl-[acyl-carrier-protein] synthase III 1 (310 aa).

Residues cysteine 112 and histidine 235 contribute to the active site. The ACP-binding stretch occupies residues 236-240 (QANIR). Residue asparagine 265 is part of the active site.

It belongs to the thiolase-like superfamily. FabH family. Homodimer.

It is found in the cytoplasm. The enzyme catalyses malonyl-[ACP] + acetyl-CoA + H(+) = 3-oxobutanoyl-[ACP] + CO2 + CoA. It functions in the pathway lipid metabolism; fatty acid biosynthesis. Catalyzes the condensation reaction of fatty acid synthesis by the addition to an acyl acceptor of two carbons from malonyl-ACP. Catalyzes the first condensation reaction which initiates fatty acid synthesis and may therefore play a role in governing the total rate of fatty acid production. Possesses both acetoacetyl-ACP synthase and acetyl transacylase activities. Its substrate specificity determines the biosynthesis of branched-chain and/or straight-chain of fatty acids. The sequence is that of Beta-ketoacyl-[acyl-carrier-protein] synthase III 1 from Bacillus anthracis.